Consider the following 250-residue polypeptide: Triosephosphate isomerase (250 aa).

9–11 (NWK) is a substrate binding site. H94 functions as the Electrophile in the catalytic mechanism. E166 (proton acceptor) is an active-site residue. Residues G172, S212, and 233-234 (GG) contribute to the substrate site.

Belongs to the triosephosphate isomerase family. In terms of assembly, homodimer.

Its subcellular location is the cytoplasm. The catalysed reaction is D-glyceraldehyde 3-phosphate = dihydroxyacetone phosphate. Its pathway is carbohydrate biosynthesis; gluconeogenesis. It functions in the pathway carbohydrate degradation; glycolysis; D-glyceraldehyde 3-phosphate from glycerone phosphate: step 1/1. In terms of biological role, involved in the gluconeogenesis. Catalyzes stereospecifically the conversion of dihydroxyacetone phosphate (DHAP) to D-glyceraldehyde-3-phosphate (G3P). The protein is Triosephosphate isomerase of Thermus thermophilus (strain ATCC 27634 / DSM 579 / HB8).